A 98-amino-acid polypeptide reads, in one-letter code: UPF0235 protein Pmen_4153 (98 aa).

Belongs to the UPF0235 family.

This Ectopseudomonas mendocina (strain ymp) (Pseudomonas mendocina) protein is UPF0235 protein Pmen_4153.